Here is a 242-residue protein sequence, read N- to C-terminus: Protein odd-skipped-related 1 (242 aa).

3 consecutive C2H2-type zinc fingers follow at residues 128 to 150, 156 to 178, and 184 to 207; these read FICK…ERTH, FHCE…KYIH, and HKCE…SCHH.

The protein belongs to the Odd C2H2-type zinc-finger protein family.

It localises to the nucleus. Its function is as follows. May function as transcription regulator. Essential for larval development. Required for morphogenesis and function of the digestive tract. The protein is Protein odd-skipped-related 1 of Caenorhabditis elegans.